The following is a 129-amino-acid chain: Phosphoribosyl-AMP cyclohydrolase (129 aa).

Aspartate 76 is a binding site for Mg(2+). Cysteine 77 provides a ligand contact to Zn(2+). The Mg(2+) site is built by aspartate 78 and aspartate 80. Positions 97 and 104 each coordinate Zn(2+).

Belongs to the PRA-CH family. Homodimer. Mg(2+) serves as cofactor. The cofactor is Zn(2+).

It localises to the cytoplasm. It carries out the reaction 1-(5-phospho-beta-D-ribosyl)-5'-AMP + H2O = 1-(5-phospho-beta-D-ribosyl)-5-[(5-phospho-beta-D-ribosylamino)methylideneamino]imidazole-4-carboxamide. The protein operates within amino-acid biosynthesis; L-histidine biosynthesis; L-histidine from 5-phospho-alpha-D-ribose 1-diphosphate: step 3/9. In terms of biological role, catalyzes the hydrolysis of the adenine ring of phosphoribosyl-AMP. The chain is Phosphoribosyl-AMP cyclohydrolase from Leptothrix cholodnii (strain ATCC 51168 / LMG 8142 / SP-6) (Leptothrix discophora (strain SP-6)).